The sequence spans 709 residues: Ribosomal RNA large subunit methyltransferase K/L (709 aa).

One can recognise a THUMP domain in the interval 43 to 154 (LAYRITLWTR…NGVITIAMNF (112 aa)).

The protein belongs to the methyltransferase superfamily. RlmKL family.

It is found in the cytoplasm. The catalysed reaction is guanosine(2445) in 23S rRNA + S-adenosyl-L-methionine = N(2)-methylguanosine(2445) in 23S rRNA + S-adenosyl-L-homocysteine + H(+). It catalyses the reaction guanosine(2069) in 23S rRNA + S-adenosyl-L-methionine = N(2)-methylguanosine(2069) in 23S rRNA + S-adenosyl-L-homocysteine + H(+). Its function is as follows. Specifically methylates the guanine in position 2445 (m2G2445) and the guanine in position 2069 (m7G2069) of 23S rRNA. The sequence is that of Ribosomal RNA large subunit methyltransferase K/L from Shewanella baltica (strain OS185).